A 131-amino-acid polypeptide reads, in one-letter code: Small ribosomal subunit protein uS8 (131 aa).

It belongs to the universal ribosomal protein uS8 family. Part of the 30S ribosomal subunit. Contacts proteins S5 and S12.

One of the primary rRNA binding proteins, it binds directly to 16S rRNA central domain where it helps coordinate assembly of the platform of the 30S subunit. In Aromatoleum aromaticum (strain DSM 19018 / LMG 30748 / EbN1) (Azoarcus sp. (strain EbN1)), this protein is Small ribosomal subunit protein uS8.